We begin with the raw amino-acid sequence, 378 residues long: GDP-mannose 3,5-epimerase 1 (378 aa).

Residues 36 to 62 (GAGG…SDWK), aspartate 60, and aspartate 80 contribute to the NAD(+) site. Residues glycine 105 and 145–147 (SAC) each bind substrate. NAD(+) contacts are provided by tyrosine 175 and lysine 179. The active-site Proton acceptor is tyrosine 175. Substrate-binding positions include asparagine 204, 217–219 (EKA), lysine 226, 242–244 (QTR), arginine 307, and serine 357.

It belongs to the NAD(P)-dependent epimerase/dehydratase family. Homodimer. It depends on NAD(+) as a cofactor.

The catalysed reaction is GDP-alpha-D-mannose = GDP-beta-L-gulose. The enzyme catalyses GDP-beta-L-gulose = GDP-beta-L-galactose. The protein operates within cofactor biosynthesis; L-ascorbate biosynthesis via GDP-alpha-D-mannose pathway; L-ascorbate from GDP-alpha-D-mannose: step 1/5. Strongly activated by NAD. Activated by NADP. Slightly activated by NADH and NADPH. Inhibited by GDP. Its function is as follows. Catalyzes a reversible epimerization of GDP-D-mannose that precedes the committed step in the biosynthesis of vitamin C (L-ascorbate), resulting in the hydrolysis of the highly energetic glycosyl-pyrophosphoryl linkage. Able to catalyze 2 distinct epimerization reactions and can release both GDP-L-galactose and GDP-L-gulose from GDP-mannose. The protein is GDP-mannose 3,5-epimerase 1 (GME-1) of Oryza sativa subsp. japonica (Rice).